A 670-amino-acid chain; its full sequence is Probable Rho-GTPase-activating protein 9 (670 aa).

In terms of domain architecture, F-BAR spans D3 to D392. The segment at N141–K161 is disordered. The region spanning S425–F622 is the Rho-GAP domain. T640 carries the phosphothreonine modification. A compositionally biased stretch (polar residues) spans P641–P663. The disordered stretch occupies residues P641–F670. S645 is subject to Phosphoserine.

It localises to the cytoplasm. In Schizosaccharomyces pombe (strain 972 / ATCC 24843) (Fission yeast), this protein is Probable Rho-GTPase-activating protein 9 (rga9).